Here is a 100-residue protein sequence, read N- to C-terminus: Putative pterin-4-alpha-carbinolamine dehydratase (100 aa).

Belongs to the pterin-4-alpha-carbinolamine dehydratase family.

It carries out the reaction (4aS,6R)-4a-hydroxy-L-erythro-5,6,7,8-tetrahydrobiopterin = (6R)-L-erythro-6,7-dihydrobiopterin + H2O. In Allorhizobium ampelinum (strain ATCC BAA-846 / DSM 112012 / S4) (Agrobacterium vitis (strain S4)), this protein is Putative pterin-4-alpha-carbinolamine dehydratase.